A 170-amino-acid chain; its full sequence is 6,7-dimethyl-8-ribityllumazine synthase 2 (170 aa).

Residues tryptophan 25, alanine 59 to glutamate 61, and leucine 83 to valine 85 each bind 5-amino-6-(D-ribitylamino)uracil. The active-site Proton donor is arginine 91. Residue serine 116 participates in 5-amino-6-(D-ribitylamino)uracil binding. Histidine 130 provides a ligand contact to (2S)-2-hydroxy-3-oxobutyl phosphate.

This sequence belongs to the DMRL synthase family. Forms an icosahedral capsid composed of 60 subunits, arranged as a dodecamer of pentamers.

It catalyses the reaction (2S)-2-hydroxy-3-oxobutyl phosphate + 5-amino-6-(D-ribitylamino)uracil = 6,7-dimethyl-8-(1-D-ribityl)lumazine + phosphate + 2 H2O + H(+). It participates in cofactor biosynthesis; riboflavin biosynthesis; riboflavin from 2-hydroxy-3-oxobutyl phosphate and 5-amino-6-(D-ribitylamino)uracil: step 1/2. Catalyzes the formation of 6,7-dimethyl-8-ribityllumazine by condensation of 5-amino-6-(D-ribitylamino)uracil with 3,4-dihydroxy-2-butanone 4-phosphate. This is the penultimate step in the biosynthesis of riboflavin. The protein is 6,7-dimethyl-8-ribityllumazine synthase 2 of Pseudomonas syringae pv. tomato (strain ATCC BAA-871 / DC3000).